Consider the following 1663-residue polypeptide: Centrosomal protein of 152 kDa (1663 aa).

Positions 1 to 60 are disordered; it reads MSIDFDSGALQTQQEDEEYDKEDYAREQELQQLLTDLPHDMLDDSLSSSPEPSYSDCSGH. Low complexity predominate over residues 44–57; that stretch reads DSLSSSPEPSYSDC. Coiled-coil stretches lie at residues 266-516, 571-664, 696-796, 843-886, 946-977, 1014-1047, and 1182-1288; these read LQVL…ARLG, ELER…KHLL, QDKK…VTAK, SDCI…VEVA, DFTVRQKEFEEKIASMKRELELKAEESQALLK, RNKLTDTLSTAKVEFEKQKNELIAQKDREMAERL, and VQQL…KNDM. 2 disordered regions span residues 1383–1408 and 1595–1628; these read ETTQDQRSLQKPAHSHQNNNPLNQNI and KRKDENSGRKYSNKIQEPSATGIHPESKLFSDVG. Positions 1603 to 1613 are enriched in polar residues; the sequence is RKYSNKIQEPS.

This sequence belongs to the CEP152 family.

It localises to the cytoplasm. It is found in the cytoskeleton. The protein resides in the microtubule organizing center. Its subcellular location is the centrosome. The protein localises to the centriole. Functionally, necessary for centrosome duplication; the function also seems to involve cep63, cdk5rap2 and wdr62 through a stepwise assembled complex at the centrosome that recruits cdk2 required for centriole duplication. Acts as a molecular scaffold facilitating the interaction of plk4 and cpap, 2 molecules involved in centriole formation. Also plays a key role in deuterosome-mediated centriole amplification in multiciliated that can generate more than 100 centrioles. Overexpression of cep152 can drive amplification of centrioles. This is Centrosomal protein of 152 kDa (cep152) from Xenopus laevis (African clawed frog).